Reading from the N-terminus, the 196-residue chain is Probable GTP-binding protein EngB (196 aa).

Residues 22 to 195 (NIPEIALVGR…WQWIEERMGK (174 aa)) enclose the EngB-type G domain. GTP is bound by residues 30–37 (GRSNVGKS), 57–61 (GKTQT), 75–78 (DVPG), 142–145 (TKID), and 174–176 (FSA). The Mg(2+) site is built by S37 and T59.

It belongs to the TRAFAC class TrmE-Era-EngA-EngB-Septin-like GTPase superfamily. EngB GTPase family. The cofactor is Mg(2+).

In terms of biological role, necessary for normal cell division and for the maintenance of normal septation. The polypeptide is Probable GTP-binding protein EngB (Limosilactobacillus reuteri (strain DSM 20016) (Lactobacillus reuteri)).